The primary structure comprises 278 residues: Shikimate dehydrogenase (NADP(+)) (278 aa).

Residues 18 to 20 (SRS) and T65 each bind shikimate. K69 acts as the Proton acceptor in catalysis. E80 contacts NADP(+). N89 and D104 together coordinate shikimate. NADP(+) contacts are provided by residues 129–133 (GAGGS) and L218. A shikimate-binding site is contributed by Y220. Residue G241 coordinates NADP(+).

Belongs to the shikimate dehydrogenase family. Homodimer.

It catalyses the reaction shikimate + NADP(+) = 3-dehydroshikimate + NADPH + H(+). Its pathway is metabolic intermediate biosynthesis; chorismate biosynthesis; chorismate from D-erythrose 4-phosphate and phosphoenolpyruvate: step 4/7. Its function is as follows. Involved in the biosynthesis of the chorismate, which leads to the biosynthesis of aromatic amino acids. Catalyzes the reversible NADPH linked reduction of 3-dehydroshikimate (DHSA) to yield shikimate (SA). In Rhodopseudomonas palustris (strain TIE-1), this protein is Shikimate dehydrogenase (NADP(+)).